A 791-amino-acid chain; its full sequence is Protein SEY1 (791 aa).

Residues 1–685 (MSEDGASKCQ…KRSTIKSHTH (685 aa)) lie on the Cytoplasmic side of the membrane. The GB1/RHD3-type G domain occupies 40–268 (GLDYHVISVF…REDYYLSGKY (229 aa)). Position 50–57 (50–57 (GSQSSGKS)) interacts with GTP. The helical transmembrane segment at 686-706 (IPMWIYAIIAVLGWNEFMLVL) threads the bilayer. Residues 707 to 709 (RNP) lie on the Lumenal side of the membrane. The helical transmembrane segment at 710–730 (LFIALMLLIVGAAYTVHRLNL) threads the bilayer. The Cytoplasmic portion of the chain corresponds to 731 to 791 (WTPLATFASA…NETKENANES (61 aa)). Residues 763–791 (PKNASSKPVESFEMQDLSVNETKENANES) are disordered.

The protein belongs to the TRAFAC class dynamin-like GTPase superfamily. GB1/RHD3 GTPase family. RHD3 subfamily.

It is found in the endoplasmic reticulum membrane. Its function is as follows. Cooperates with the reticulon proteins and tubule-shaping DP1 family proteins to generate and maintain the structure of the tubular endoplasmic reticulum network. Has GTPase activity, which is required for its function in ER organization. This chain is Protein SEY1, found in Eremothecium gossypii (strain ATCC 10895 / CBS 109.51 / FGSC 9923 / NRRL Y-1056) (Yeast).